A 345-amino-acid chain; its full sequence is Uroporphyrinogen decarboxylase (345 aa).

Residues 26–30, D76, Y151, S205, and H321 each bind substrate; that span reads RQAGR.

It belongs to the uroporphyrinogen decarboxylase family. Homodimer.

The protein localises to the cytoplasm. It carries out the reaction uroporphyrinogen III + 4 H(+) = coproporphyrinogen III + 4 CO2. It participates in porphyrin-containing compound metabolism; protoporphyrin-IX biosynthesis; coproporphyrinogen-III from 5-aminolevulinate: step 4/4. In terms of biological role, catalyzes the decarboxylation of four acetate groups of uroporphyrinogen-III to yield coproporphyrinogen-III. This chain is Uroporphyrinogen decarboxylase, found in Phenylobacterium zucineum (strain HLK1).